The following is a 166-amino-acid chain: Small ribosomal subunit protein uS5 (166 aa).

Positions 11–74 (LVEKLVAVDR…EAARRNMITV (64 aa)) constitute an S5 DRBM domain.

Belongs to the universal ribosomal protein uS5 family. Part of the 30S ribosomal subunit. Contacts proteins S4 and S8.

Functionally, with S4 and S12 plays an important role in translational accuracy. Its function is as follows. Located at the back of the 30S subunit body where it stabilizes the conformation of the head with respect to the body. This is Small ribosomal subunit protein uS5 from Acinetobacter baumannii (strain ATCC 17978 / DSM 105126 / CIP 53.77 / LMG 1025 / NCDC KC755 / 5377).